Consider the following 550-residue polypeptide: Pectinesterase 2.1 (550 aa).

An N-linked (GlcNAc...) asparagine glycan is attached at asparagine 179. Positions 312 and 342 each coordinate substrate. Cysteine 331 and cysteine 358 are oxidised to a cystine. Aspartate 365 acts as the Proton donor in catalysis. The active-site Nucleophile is the aspartate 386. Cysteines 399 and 433 form a disulfide. Residues arginine 454 and tryptophan 456 each contribute to the substrate site.

It in the N-terminal section; belongs to the PMEI family. This sequence in the C-terminal section; belongs to the pectinesterase family.

It localises to the secreted. It is found in the cell wall. The enzyme catalyses [(1-&gt;4)-alpha-D-galacturonosyl methyl ester](n) + n H2O = [(1-&gt;4)-alpha-D-galacturonosyl](n) + n methanol + n H(+). The protein operates within glycan metabolism; pectin degradation; 2-dehydro-3-deoxy-D-gluconate from pectin: step 1/5. In terms of biological role, pectinesterase may play a role in cell wall metabolism during fruit growth and development prior to ripening and may be required for preparing cell walls for softening by polygalacturonase during fruit ripening. This chain is Pectinesterase 2.1 (PME2.1), found in Solanum lycopersicum (Tomato).